Here is a 666-residue protein sequence, read N- to C-terminus: Amyloid beta A4 precursor protein-binding family B member 1-interacting protein (666 aa).

Ser55 is modified (phosphoserine). Residues 122-155 (SQYEDDLPPPPADPVLDLPLPPPPPEPLSQEEEE) are disordered. Positions 129–148 (PPPPADPVLDLPLPPPPPEP) are enriched in pro residues. In terms of domain architecture, Ras-associating spans 176 to 263 (KKLVVKVHMN…KILFLEKEEK (88 aa)). One can recognise a PH domain in the interval 310 to 419 (VPELEGALYL…WVMGIRIAKY (110 aa)). The interval 448-666 (AAAPAQPSTG…ALQKKRGNVS (219 aa)) is disordered. Over residues 453 to 478 (QPSTGPKTGTTQPNGQIPQATHSVSA) the composition is skewed to polar residues. The span at 483-504 (AQRHAETSKDKKPALGNHHDPA) shows a compositional bias: basic and acidic residues. Residue Ser526 is modified to Phosphoserine. Phosphothreonine is present on Thr528. Ser531 carries the post-translational modification Phosphoserine. 2 stretches are compositionally biased toward pro residues: residues 547-589 (PAPP…PPPS) and 598-631 (LPPP…PVPP).

The protein belongs to the MRL family. As to quaternary structure, interacts, through the N-terminal Pro-rich region, with the WW domain of APBB1. Interacts with RAP1A, PFN1, TLN1, VASP, VCL and ENAH. Widely expressed with high expression in thymus, spleen, lymph node, bone marrow and peripheral leukocytes.

It localises to the cell membrane. The protein localises to the cell projection. Its subcellular location is the lamellipodium. The protein resides in the cell junction. It is found in the focal adhesion. It localises to the cytoplasm. The protein localises to the cytoskeleton. In terms of biological role, appears to function in the signal transduction from Ras activation to actin cytoskeletal remodeling. Suppresses insulin-induced promoter activities through AP1 and SRE. Mediates Rap1-induced adhesion. The polypeptide is Amyloid beta A4 precursor protein-binding family B member 1-interacting protein (APBB1IP) (Homo sapiens (Human)).